A 229-amino-acid chain; its full sequence is MAGHDSGNAKRGRSPSFGVFVRKPVERAPAKGASDGAVDSQAIRIDAAQSWPDDAVEVGAVVDAYGLKGWVKLAAHAGAGRGGDALLKARDWWLQKGAERKFARVTQAKLHGDTVVAHPDGSVDRDTALALRGARVFVRRGDFPALAADEFYWVDLIGLDVVNEAGVALGKIADMIDNGVHSIMRVEYPATGKDGRPKTGERLIPFVGVYVKAVEQAAGRVVVDWEADY.

The tract at residues 1–21 (MAGHDSGNAKRGRSPSFGVFV) is disordered. A PRC barrel domain is found at 148-229 (ADEFYWVDLI…RVVVDWEADY (82 aa)).

It belongs to the RimM family. As to quaternary structure, binds ribosomal protein uS19.

Its subcellular location is the cytoplasm. Functionally, an accessory protein needed during the final step in the assembly of 30S ribosomal subunit, possibly for assembly of the head region. Essential for efficient processing of 16S rRNA. May be needed both before and after RbfA during the maturation of 16S rRNA. It has affinity for free ribosomal 30S subunits but not for 70S ribosomes. In Burkholderia mallei (strain NCTC 10247), this protein is Ribosome maturation factor RimM.